Reading from the N-terminus, the 178-residue chain is Large ribosomal subunit protein uL6 (178 aa).

This sequence belongs to the universal ribosomal protein uL6 family. As to quaternary structure, part of the 50S ribosomal subunit.

Its function is as follows. This protein binds to the 23S rRNA, and is important in its secondary structure. It is located near the subunit interface in the base of the L7/L12 stalk, and near the tRNA binding site of the peptidyltransferase center. This is Large ribosomal subunit protein uL6 from Nautilia profundicola (strain ATCC BAA-1463 / DSM 18972 / AmH).